The primary structure comprises 394 residues: Upstream-binding factor 1-like protein 1 (394 aa).

Residues 101-169 (PKRPLTAYLR…DFQKKMRQFK (69 aa)) constitute a DNA-binding region (HMG box 1). Basic residues predominate over residues 167 to 180 (QFKKRHPVSGHPKK). The tract at residues 167–197 (QFKKRHPVSGHPKKSVVPQSHPTKVPTKSQG) is disordered. A compositionally biased stretch (polar residues) spans 183–197 (VPQSHPTKVPTKSQG). A DNA-binding region (HMG box 2) is located at residues 225-291 (RKPPMNAYHK…QYRVKLDLWL (67 aa)). The segment at 305 to 394 (AKATCGKRKN…SDSSSTDEDD (90 aa)) is disordered.

It is found in the cytoplasm. Its subcellular location is the nucleus. In terms of biological role, essential for proliferation of the inner cell mass and trophectodermal cells in peri-implantation development. This is Upstream-binding factor 1-like protein 1 from Mus musculus (Mouse).